The following is a 303-amino-acid chain: Mycothiol acetyltransferase (303 aa).

N-acetyltransferase domains lie at 3 to 152 and 155 to 303; these read VTVT…VSLP and VRIR…MYRS. D35 is a binding site for 1D-myo-inositol 2-(L-cysteinylamino)-2-deoxy-alpha-D-glucopyranoside. 79 to 81 is a binding site for acetyl-CoA; that stretch reads LTV. 3 residues coordinate 1D-myo-inositol 2-(L-cysteinylamino)-2-deoxy-alpha-D-glucopyranoside: E182, K224, and E237. Residues 241–243 and 248–254 each bind acetyl-CoA; these read VGV and QGSGLGR. 1D-myo-inositol 2-(L-cysteinylamino)-2-deoxy-alpha-D-glucopyranoside is bound at residue Y275.

It belongs to the acetyltransferase family. MshD subfamily. In terms of assembly, monomer.

The enzyme catalyses 1D-myo-inositol 2-(L-cysteinylamino)-2-deoxy-alpha-D-glucopyranoside + acetyl-CoA = mycothiol + CoA + H(+). Functionally, catalyzes the transfer of acetyl from acetyl-CoA to desacetylmycothiol (Cys-GlcN-Ins) to form mycothiol. The polypeptide is Mycothiol acetyltransferase (Kocuria rhizophila (strain ATCC 9341 / DSM 348 / NBRC 103217 / DC2201)).